The following is a 265-amino-acid chain: Protein Rv2993c (265 aa).

3 residues coordinate a divalent metal cation: glutamate 114, glutamate 116, and aspartate 145.

It in the C-terminal section; belongs to the FAH family. A divalent metal cation is required as a cofactor.

This is Protein Rv2993c from Mycobacterium tuberculosis (strain ATCC 25618 / H37Rv).